Consider the following 94-residue polypeptide: Putative RNA-binding protein RbpD (94 aa).

An RRM domain is found at 2 to 79 (TIYVGNLSYR…RQLRVNKAKP (78 aa)). Residues 73–94 (RVNKAKPREDDRRGSWGKKQDY) form a disordered region. Residues 78 to 94 (KPREDDRRGSWGKKQDY) are compositionally biased toward basic and acidic residues.

This chain is Putative RNA-binding protein RbpD (rbpD), found in Nostoc sp. (strain PCC 7120 / SAG 25.82 / UTEX 2576).